We begin with the raw amino-acid sequence, 163 residues long: Nucleotide-binding protein YajQ (163 aa).

The protein belongs to the YajQ family.

Nucleotide-binding protein. This Salmonella agona (strain SL483) protein is Nucleotide-binding protein YajQ.